A 255-amino-acid polypeptide reads, in one-letter code: MRILCTNDDGIHAPGLKVIEEIARALSDDVWIVAPELDQSGVSHSLSLNDPLRLREVGPRHFAVRGTPTDCVIMGARHILGAKLPDLVLSGVNKGRNVAEDVVYSGTIAGALEGTILGLPSFALSQEFSIATRDKPSWDTALKFGPQIVRKVLEAGVPRNTVINVNFPACAPDEVKGLVVTRQGKRNLGFLKVDERRDGRGNPYFWIGFDRAAALDVPDEGTDLAALAARYVSVTPLRLDRTDEAFSGKLTTILG.

The a divalent metal cation site is built by Asp-8, Asp-9, Ser-40, and Asn-93.

This sequence belongs to the SurE nucleotidase family. Requires a divalent metal cation as cofactor.

The protein resides in the cytoplasm. It carries out the reaction a ribonucleoside 5'-phosphate + H2O = a ribonucleoside + phosphate. Nucleotidase that shows phosphatase activity on nucleoside 5'-monophosphates. The polypeptide is 5'-nucleotidase SurE (Bradyrhizobium sp. (strain BTAi1 / ATCC BAA-1182)).